Consider the following 94-residue polypeptide: Integration host factor subunit beta (94 aa).

This sequence belongs to the bacterial histone-like protein family. In terms of assembly, heterodimer of an alpha and a beta chain.

Functionally, this protein is one of the two subunits of integration host factor, a specific DNA-binding protein that functions in genetic recombination as well as in transcriptional and translational control. This is Integration host factor subunit beta from Yersinia pseudotuberculosis serotype O:1b (strain IP 31758).